A 43-amino-acid chain; its full sequence is MAKLHDYYKDEVVQKLMSQFGYHSVMQVPRVEKITLNMGVGEA.

Belongs to the universal ribosomal protein uL5 family. Part of the 50S ribosomal subunit; part of the 5S rRNA/L5/L18/L25 subcomplex. Contacts the 5S rRNA and the P site tRNA. Forms a bridge to the 30S subunit in the 70S ribosome.

In terms of biological role, this is one of the proteins that bind and probably mediate the attachment of the 5S RNA into the large ribosomal subunit, where it forms part of the central protuberance. In the 70S ribosome it contacts protein S13 of the 30S subunit (bridge B1b), connecting the 2 subunits; this bridge is implicated in subunit movement. Contacts the P site tRNA; the 5S rRNA and some of its associated proteins might help stabilize positioning of ribosome-bound tRNAs. This Proteus vulgaris protein is Large ribosomal subunit protein uL5 (rplE).